The primary structure comprises 563 residues: NAD-dependent malic enzyme (563 aa).

Residue Tyr101 is the Proton donor of the active site. NAD(+) is bound at residue Arg154. Lys172 functions as the Proton acceptor in the catalytic mechanism. Residues Glu243, Asp244, and Asp267 each coordinate a divalent metal cation. Positions 267 and 416 each coordinate NAD(+).

Belongs to the malic enzymes family. Homotetramer. Mg(2+) is required as a cofactor. It depends on Mn(2+) as a cofactor.

It catalyses the reaction (S)-malate + NAD(+) = pyruvate + CO2 + NADH. It carries out the reaction oxaloacetate + H(+) = pyruvate + CO2. This is NAD-dependent malic enzyme from Pseudomonas syringae pv. tomato (strain ATCC BAA-871 / DC3000).